Consider the following 278-residue polypeptide: Polyamine aminopropyltransferase (278 aa).

The 238-residue stretch at 3 to 240 (EGWFTEAVED…GWWSATLMVN (238 aa)) folds into the PABS domain. Q33 is a binding site for S-methyl-5'-thioadenosine. Residues H64 and D88 each contribute to the spermidine site. Residues E108 and 139 to 140 (DG) contribute to the S-methyl-5'-thioadenosine site. The Proton acceptor role is filled by D158. 158-161 (DSTD) serves as a coordination point for spermidine. P165 contributes to the S-methyl-5'-thioadenosine binding site.

The protein belongs to the spermidine/spermine synthase family. In terms of assembly, homodimer or homotetramer.

The protein localises to the cytoplasm. It carries out the reaction S-adenosyl 3-(methylsulfanyl)propylamine + putrescine = S-methyl-5'-thioadenosine + spermidine + H(+). Its pathway is amine and polyamine biosynthesis; spermidine biosynthesis; spermidine from putrescine: step 1/1. Its function is as follows. Catalyzes the irreversible transfer of a propylamine group from the amino donor S-adenosylmethioninamine (decarboxy-AdoMet) to putrescine (1,4-diaminobutane) to yield spermidine. This is Polyamine aminopropyltransferase from Halorhodospira halophila (strain DSM 244 / SL1) (Ectothiorhodospira halophila (strain DSM 244 / SL1)).